We begin with the raw amino-acid sequence, 355 residues long: uncharacterized protein (355 aa).

This is an uncharacterized protein from Acanthamoeba polyphaga (Amoeba).